The sequence spans 373 residues: tRNA-specific 2-thiouridylase MnmA (373 aa).

Residues 12–19 (GMSGGVDS) and methionine 38 each bind ATP. Positions 98 to 100 (NPD) are interaction with target base in tRNA. The active-site Nucleophile is cysteine 103. Residues cysteine 103 and cysteine 200 are joined by a disulfide bond. Glycine 128 provides a ligand contact to ATP. Positions 150 to 152 (KDQ) are interaction with tRNA. Cysteine 200 acts as the Cysteine persulfide intermediate in catalysis. Residues 312 to 313 (RY) are interaction with tRNA.

This sequence belongs to the MnmA/TRMU family. In terms of assembly, interacts with TusE.

Its subcellular location is the cytoplasm. The catalysed reaction is S-sulfanyl-L-cysteinyl-[protein] + uridine(34) in tRNA + AH2 + ATP = 2-thiouridine(34) in tRNA + L-cysteinyl-[protein] + A + AMP + diphosphate + H(+). In terms of biological role, catalyzes the 2-thiolation of uridine at the wobble position (U34) of tRNA(Lys), tRNA(Glu) and tRNA(Gln), leading to the formation of s(2)U34, the first step of tRNA-mnm(5)s(2)U34 synthesis. Sulfur is provided by IscS, via a sulfur-relay system. Binds ATP and its substrate tRNAs. This chain is tRNA-specific 2-thiouridylase MnmA, found in Yersinia enterocolitica serotype O:8 / biotype 1B (strain NCTC 13174 / 8081).